The following is a 261-amino-acid chain: Carnitinyl-CoA dehydratase (261 aa).

Glu111 (nucleophile) is an active-site residue. Residue Glu131 is the Proton acceptor of the active site.

Belongs to the enoyl-CoA hydratase/isomerase family.

It carries out the reaction (R)-carnitinyl-CoA = crotonobetainyl-CoA + H2O. The protein operates within amine and polyamine metabolism; carnitine metabolism. Functionally, catalyzes the reversible dehydration of L-carnitinyl-CoA to crotonobetainyl-CoA. This chain is Carnitinyl-CoA dehydratase, found in Salmonella arizonae (strain ATCC BAA-731 / CDC346-86 / RSK2980).